The sequence spans 109 residues: Large ribosomal subunit protein uL22 (109 aa).

It belongs to the universal ribosomal protein uL22 family. As to quaternary structure, part of the 50S ribosomal subunit.

This protein binds specifically to 23S rRNA; its binding is stimulated by other ribosomal proteins, e.g. L4, L17, and L20. It is important during the early stages of 50S assembly. It makes multiple contacts with different domains of the 23S rRNA in the assembled 50S subunit and ribosome. Its function is as follows. The globular domain of the protein is located near the polypeptide exit tunnel on the outside of the subunit, while an extended beta-hairpin is found that lines the wall of the exit tunnel in the center of the 70S ribosome. The chain is Large ribosomal subunit protein uL22 from Thiobacillus denitrificans (strain ATCC 25259 / T1).